The primary structure comprises 207 residues: Large ribosomal subunit protein uL4 (207 aa).

The protein belongs to the universal ribosomal protein uL4 family. Part of the 50S ribosomal subunit.

One of the primary rRNA binding proteins, this protein initially binds near the 5'-end of the 23S rRNA. It is important during the early stages of 50S assembly. It makes multiple contacts with different domains of the 23S rRNA in the assembled 50S subunit and ribosome. In terms of biological role, forms part of the polypeptide exit tunnel. The polypeptide is Large ribosomal subunit protein uL4 (Pelagibacter ubique (strain HTCC1062)).